Here is a 134-residue protein sequence, read N- to C-terminus: Small ribosomal subunit protein bS6 (134 aa).

Residues 99 to 134 are disordered; sequence EPSAMMQKRDRDERKDRERGRRRDEDGFSGDRNEEN. Basic and acidic residues predominate over residues 105-134; sequence QKRDRDERKDRERGRRRDEDGFSGDRNEEN.

Belongs to the bacterial ribosomal protein bS6 family.

Binds together with bS18 to 16S ribosomal RNA. In Methylobacterium nodulans (strain LMG 21967 / CNCM I-2342 / ORS 2060), this protein is Small ribosomal subunit protein bS6.